A 161-amino-acid chain; its full sequence is Mediator of RNA polymerase II transcription subunit 10 (161 aa).

The protein belongs to the Mediator complex subunit 10 family. In terms of assembly, component of the Mediator complex.

It localises to the nucleus. In terms of biological role, component of the Mediator complex, a coactivator involved in the regulated transcription of nearly all RNA polymerase II-dependent genes. Mediator functions as a bridge to convey information from gene-specific regulatory proteins to the basal RNA polymerase II transcription machinery. Mediator is recruited to promoters by direct interactions with regulatory proteins and serves as a scaffold for the assembly of a functional preinitiation complex with RNA polymerase II and the general transcription factors. The protein is Mediator of RNA polymerase II transcription subunit 10 (NUT2) of Kluyveromyces lactis (strain ATCC 8585 / CBS 2359 / DSM 70799 / NBRC 1267 / NRRL Y-1140 / WM37) (Yeast).